The following is a 469-amino-acid chain: Septin homolog spn1 (469 aa).

The disordered stretch occupies residues 1-58; it reads MASMVLADGMPTVKDDSTRSRGSDVDSFTSTDNVTQINVEAAISENKNEEKPIQDNSE. Residues 13-24 are compositionally biased toward basic and acidic residues; the sequence is VKDDSTRSRGSD. Polar residues predominate over residues 26 to 38; that stretch reads DSFTSTDNVTQIN. The Septin-type G domain occupies 92–367; the sequence is QGFNFNVLVL…EAYRTERLLS (276 aa). The tract at residues 102-109 is G1 motif; it reads GESGSGKS. GTP-binding positions include 102-109, Thr-139, Gly-165, 244-252, and Arg-317; these read GESGSGKS and KADTLTDDE. Residues 162–165 form a G3 motif region; that stretch reads DTPG. The interval 243–246 is G4 motif; it reads AKAD. The stretch at 383-469 forms a coiled coil; sequence SAKLEEERAL…NEKSKRKFFK (87 aa).

This sequence belongs to the TRAFAC class TrmE-Era-EngA-EngB-Septin-like GTPase superfamily. Septin GTPase family. As to quaternary structure, component of the septin complex composed of two copies of each spn1, spn2, spn3 and spn4.

Its subcellular location is the cytoplasm. The protein resides in the cell cortex. Functionally, plays a role in the cell cycle. Involved in a late stage of septum formation leading to the separation of the daughter cells. This chain is Septin homolog spn1 (spn1), found in Schizosaccharomyces pombe (strain 972 / ATCC 24843) (Fission yeast).